The following is a 128-amino-acid chain: 3-aminoacrylate deaminase RutC (128 aa).

The protein belongs to the RutC family.

The enzyme catalyses (Z)-3-aminoacrylate + H2O + H(+) = 3-oxopropanoate + NH4(+). Functionally, involved in pyrimidine catabolism. Catalyzes the deamination of 3-aminoacrylate to malonic semialdehyde, a reaction that can also occur spontaneously. RutC may facilitate the reaction and modulate the metabolic fitness, rather than catalyzing essential functions. This Serratia proteamaculans (strain 568) protein is 3-aminoacrylate deaminase RutC.